A 435-amino-acid polypeptide reads, in one-letter code: tRNA-2-methylthio-N(6)-dimethylallyladenosine synthase (435 aa).

Positions 1–117 constitute an MTTase N-terminal domain; that stretch reads MKYFIKTYGC…MPKLLEDVKV (117 aa). [4Fe-4S] cluster is bound by residues Cys10, Cys46, Cys80, Cys156, Cys160, and Cys163. Residues 142 to 370 enclose the Radical SAM core domain; it reads RDNSYCAYVT…LEIQKAITSK (229 aa). The TRAM domain maps to 373 to 433; the sequence is QRYKNTVQKV…FQSLDGVVQN (61 aa).

It belongs to the methylthiotransferase family. MiaB subfamily. Monomer. Requires [4Fe-4S] cluster as cofactor.

It localises to the cytoplasm. It catalyses the reaction N(6)-dimethylallyladenosine(37) in tRNA + (sulfur carrier)-SH + AH2 + 2 S-adenosyl-L-methionine = 2-methylsulfanyl-N(6)-dimethylallyladenosine(37) in tRNA + (sulfur carrier)-H + 5'-deoxyadenosine + L-methionine + A + S-adenosyl-L-homocysteine + 2 H(+). Catalyzes the methylthiolation of N6-(dimethylallyl)adenosine (i(6)A), leading to the formation of 2-methylthio-N6-(dimethylallyl)adenosine (ms(2)i(6)A) at position 37 in tRNAs that read codons beginning with uridine. This is tRNA-2-methylthio-N(6)-dimethylallyladenosine synthase from Hydrogenobaculum sp. (strain Y04AAS1).